The chain runs to 536 residues: UDP-glucuronosyltransferase 2A2 (536 aa).

Topologically, residues 1-15 (MVSIRDFTMPKKFVQ) are cytoplasmic. The helical transmembrane segment at 16 to 36 (MLVFNLTLTEVVLSGNVLIWP) threads the bilayer. Over 37–500 (TDGSHWLNIK…TWFQYHSLDV (464 aa)) the chain is Lumenal. N-linked (GlcNAc...) asparagine glycosylation is found at Asn-58, Asn-322, and Asn-356. A helical transmembrane segment spans residues 501–521 (IGFLLVCVTTAIFLVIQCCLF). Residues 522-536 (SCQKFGKIGKKKKRE) are Cytoplasmic-facing.

It belongs to the UDP-glycosyltransferase family. In terms of tissue distribution, mainly expressed in the nasal mucosa.

The protein resides in the endoplasmic reticulum membrane. It carries out the reaction glucuronate acceptor + UDP-alpha-D-glucuronate = acceptor beta-D-glucuronoside + UDP + H(+). It catalyses the reaction 17alpha-estradiol + UDP-alpha-D-glucuronate = 17alpha-estradiol 3-O-(beta-D-glucuronate) + UDP + H(+). The catalysed reaction is 17beta-estradiol + UDP-alpha-D-glucuronate = 17beta-estradiol 3-O-(beta-D-glucuronate) + UDP + H(+). The enzyme catalyses chenodeoxycholate + UDP-alpha-D-glucuronate = chenodeoxycholoyl-24-O-(beta-D-glucuronate) + UDP. It carries out the reaction lithocholate + UDP-alpha-D-glucuronate = lithocholoyl-24-O-(beta-D-glucuronate) + UDP. It catalyses the reaction deoxycholate + UDP-alpha-D-glucuronate = deoxycholoyl-24-O-(beta-D-glucuronate) + UDP. The catalysed reaction is hyocholate + UDP-alpha-D-glucuronate = hyocholoyl-24-O-(beta-D-glucuronate) + UDP. The enzyme catalyses hyodeoxycholate + UDP-alpha-D-glucuronate = hyodeoxycholate 6-O-(beta-D-glucuronate) + UDP + H(+). Functionally, UDP-glucuronosyltransferase (UGT) that catalyzes phase II biotransformation reactions in which lipophilic substrates are conjugated with glucuronic acid to increase the metabolite's water solubility, thereby facilitating excretion into either the urine or bile. Essential for the elimination and detoxification of drugs, xenobiotics and endogenous compounds. Catalyzes the glucuronidation of endogenous estrogen hormone estradiol. Contributes to bile acid (BA) detoxification by catalyzing the glucuronidation of BA substrates, which are natural detergents for dietary lipids absorption. Shows a potential role in detoxification of toxic waste compounds in the amniotic fluid before birth, and air-born chemical after birth. This Homo sapiens (Human) protein is UDP-glucuronosyltransferase 2A2.